Here is an 84-residue protein sequence, read N- to C-terminus: Small ribosomal subunit protein bS20 (84 aa).

Residues Met-1–Arg-22 are disordered. Residues Arg-9–Arg-22 are compositionally biased toward basic residues.

Belongs to the bacterial ribosomal protein bS20 family.

Binds directly to 16S ribosomal RNA. The polypeptide is Small ribosomal subunit protein bS20 (Rubrobacter xylanophilus (strain DSM 9941 / JCM 11954 / NBRC 16129 / PRD-1)).